A 331-amino-acid polypeptide reads, in one-letter code: Phosphoribosylformylglycinamidine cyclo-ligase (331 aa).

It belongs to the AIR synthase family.

The protein localises to the cytoplasm. The enzyme catalyses 2-formamido-N(1)-(5-O-phospho-beta-D-ribosyl)acetamidine + ATP = 5-amino-1-(5-phospho-beta-D-ribosyl)imidazole + ADP + phosphate + H(+). Its pathway is purine metabolism; IMP biosynthesis via de novo pathway; 5-amino-1-(5-phospho-D-ribosyl)imidazole from N(2)-formyl-N(1)-(5-phospho-D-ribosyl)glycinamide: step 2/2. The protein is Phosphoribosylformylglycinamidine cyclo-ligase of Clostridium novyi (strain NT).